A 350-amino-acid polypeptide reads, in one-letter code: Ion-translocating oxidoreductase complex subunit D (350 aa).

A run of 3 helical transmembrane segments spans residues 36–56, 89–109, and 124–144; these read CYFFGWGTLIQIALAIAIAVA, IPALAPWWIAAIGVIFAILVV, and AMAAYVMLLISFPMQMTTWVA. The residue at position 185 (Thr-185) is an FMN phosphoryl threonine. The next 5 membrane-spanning stretches (helical) occupy residues 212 to 232, 239 to 259, 265 to 285, 298 to 318, and 319 to 339; these read GFGIGWALINLAYLAGGLVML, WQISTAILASLFVCASIGYLL, MGPLLHLFSGATMLAAFFIAT, LIFGSLIGLLVYLIRSFCGYP, and DAFAFAVLLANLCAPFIDYYV.

The protein belongs to the NqrB/RnfD family. In terms of assembly, the complex is composed of six subunits: RnfA, RnfB, RnfC, RnfD, RnfE and RnfG. FMN serves as cofactor.

It localises to the cell inner membrane. In terms of biological role, part of a membrane-bound complex that couples electron transfer with translocation of ions across the membrane. The chain is Ion-translocating oxidoreductase complex subunit D from Shewanella loihica (strain ATCC BAA-1088 / PV-4).